The chain runs to 140 residues: MIKLRLKRFGKKREASFRLVACNSTSRRDGRPLQELGFYNPRTKETRLDTEAIRERLGQGAQPTDVVRTLLERGGLIEKTIRPAETVGKAKQAAKREEEAKQAAKEAAEAKAAAEAEAAAAAEAAKAEDAPDGETESSEG.

The segment at 86-140 (TVGKAKQAAKREEEAKQAAKEAAEAKAAAEAEAAAAAEAAKAEDAPDGETESSEG) is disordered. Residues 94–114 (AKREEEAKQAAKEAAEAKAAA) are compositionally biased toward basic and acidic residues. A compositionally biased stretch (low complexity) spans 115–124 (EAEAAAAAEA). A compositionally biased stretch (acidic residues) spans 130–140 (APDGETESSEG).

Belongs to the bacterial ribosomal protein bS16 family.

This is Small ribosomal subunit protein bS16 from Parasynechococcus marenigrum (strain WH8102).